Here is a 634-residue protein sequence, read N- to C-terminus: Chaperone protein DnaK (634 aa).

Thr-197 carries the post-translational modification Phosphothreonine; by autocatalysis. The segment covering 515-528 has biased composition (basic and acidic residues); sequence LHKEDDKKRKESVD. Disordered stretches follow at residues 515–536 and 595–634; these read LHKE…ADAI and YKAA…AEVE. Over residues 603-615 the composition is skewed to gly residues; the sequence is NAGGTAGGNGNAG.

Belongs to the heat shock protein 70 family.

Functionally, acts as a chaperone. The polypeptide is Chaperone protein DnaK (Campylobacter hominis (strain ATCC BAA-381 / DSM 21671 / CCUG 45161 / LMG 19568 / NCTC 13146 / CH001A)).